Here is a 542-residue protein sequence, read N- to C-terminus: Major facilitator superfamily domain-containing protein 6-like (542 aa).

11 consecutive transmembrane segments (helical) span residues Leu-46 to Leu-66, Leu-89 to Val-109, Met-198 to Trp-218, Val-246 to Ile-266, Phe-272 to Tyr-292, Val-321 to Met-341, Gly-352 to Leu-372, Trp-381 to Trp-401, Trp-404 to Val-424, Phe-444 to Val-464, and Val-469 to Val-489.

This sequence belongs to the major facilitator superfamily. MFSD6 family.

The protein localises to the membrane. The polypeptide is Major facilitator superfamily domain-containing protein 6-like (mfsd6l) (Danio rerio (Zebrafish)).